The sequence spans 281 residues: NADPH-dependent 7-cyano-7-deazaguanine reductase (281 aa).

88–90 (VES) contributes to the substrate binding site. 90-91 (SK) contacts NADPH. Residue Cys-189 is the Thioimide intermediate of the active site. Asp-196 (proton donor) is an active-site residue. A substrate-binding site is contributed by 228 to 229 (HE). 257–258 (RG) contacts NADPH.

This sequence belongs to the GTP cyclohydrolase I family. QueF type 2 subfamily. Homodimer.

It is found in the cytoplasm. The catalysed reaction is 7-aminomethyl-7-carbaguanine + 2 NADP(+) = 7-cyano-7-deazaguanine + 2 NADPH + 3 H(+). Its pathway is tRNA modification; tRNA-queuosine biosynthesis. In terms of biological role, catalyzes the NADPH-dependent reduction of 7-cyano-7-deazaguanine (preQ0) to 7-aminomethyl-7-deazaguanine (preQ1). In Klebsiella pneumoniae subsp. pneumoniae (strain ATCC 700721 / MGH 78578), this protein is NADPH-dependent 7-cyano-7-deazaguanine reductase.